The following is a 728-amino-acid chain: LPS-assembly protein LptD (728 aa).

The N-terminal stretch at 1–21 is a signal peptide; sequence MSALPGFTLAALLLNVSLAEA.

This sequence belongs to the LptD family. In terms of assembly, component of the lipopolysaccharide transport and assembly complex. Interacts with LptE and LptA.

It is found in the cell outer membrane. Its function is as follows. Together with LptE, is involved in the assembly of lipopolysaccharide (LPS) at the surface of the outer membrane. This Thiobacillus denitrificans (strain ATCC 25259 / T1) protein is LPS-assembly protein LptD.